A 93-amino-acid polypeptide reads, in one-letter code: Integration host factor subunit beta (93 aa).

This sequence belongs to the bacterial histone-like protein family. In terms of assembly, heterodimer of an alpha and a beta chain.

In terms of biological role, this protein is one of the two subunits of integration host factor, a specific DNA-binding protein that functions in genetic recombination as well as in transcriptional and translational control. This Mannheimia haemolytica (Pasteurella haemolytica) protein is Integration host factor subunit beta (ihfB).